The chain runs to 76 residues: Putative membrane protein insertion efficiency factor (76 aa).

The protein belongs to the UPF0161 family.

The protein resides in the cell inner membrane. Functionally, could be involved in insertion of integral membrane proteins into the membrane. The chain is Putative membrane protein insertion efficiency factor from Porphyromonas gingivalis (strain ATCC 33277 / DSM 20709 / CIP 103683 / JCM 12257 / NCTC 11834 / 2561).